The following is a 380-amino-acid chain: DNA primase small subunit PriS (380 aa).

Residues aspartate 101, aspartate 103, and aspartate 282 contribute to the active site.

Belongs to the eukaryotic-type primase small subunit family. In terms of assembly, heterodimer of a small subunit (PriS) and a large subunit (PriL). Mg(2+) serves as cofactor. It depends on Mn(2+) as a cofactor.

Catalytic subunit of DNA primase, an RNA polymerase that catalyzes the synthesis of short RNA molecules used as primers for DNA polymerase during DNA replication. The small subunit contains the primase catalytic core and has DNA synthesis activity on its own. Binding to the large subunit stabilizes and modulates the activity, increasing the rate of DNA synthesis while decreasing the length of the DNA fragments, and conferring RNA synthesis capability. The DNA polymerase activity may enable DNA primase to also catalyze primer extension after primer synthesis. May also play a role in DNA repair. This is DNA primase small subunit PriS from Hyperthermus butylicus (strain DSM 5456 / JCM 9403 / PLM1-5).